Reading from the N-terminus, the 89-residue chain is Small ribosomal subunit protein uS15 (89 aa).

It belongs to the universal ribosomal protein uS15 family. As to quaternary structure, part of the 30S ribosomal subunit. Forms a bridge to the 50S subunit in the 70S ribosome, contacting the 23S rRNA.

In terms of biological role, one of the primary rRNA binding proteins, it binds directly to 16S rRNA where it helps nucleate assembly of the platform of the 30S subunit by binding and bridging several RNA helices of the 16S rRNA. Its function is as follows. Forms an intersubunit bridge (bridge B4) with the 23S rRNA of the 50S subunit in the ribosome. The chain is Small ribosomal subunit protein uS15 from Bacillus pumilus (strain SAFR-032).